The chain runs to 70 residues: Large ribosomal subunit protein eL38 (70 aa).

Lysine 4 is covalently cross-linked (Glycyl lysine isopeptide (Lys-Gly) (interchain with G-Cter in SUMO2)). An N6-acetyllysine; alternate modification is found at lysine 9. A Glycyl lysine isopeptide (Lys-Gly) (interchain with G-Cter in SUMO2); alternate cross-link involves residue lysine 9. Position 67 is an N6-acetyllysine (lysine 67).

It belongs to the eukaryotic ribosomal protein eL38 family. As to quaternary structure, component of the large ribosomal subunit.

The protein resides in the cytoplasm. Functionally, component of the large ribosomal subunit. The ribosome is a large ribonucleoprotein complex responsible for the synthesis of proteins in the cell. This chain is Large ribosomal subunit protein eL38 (RPL38), found in Homo sapiens (Human).